Consider the following 329-residue polypeptide: GTP 3',8-cyclase (329 aa).

The Radical SAM core domain occupies 8 to 234; sequence AFARKFFYLR…QIRQRSDGPA (227 aa). Residue Arg17 participates in GTP binding. Cys24 and Cys28 together coordinate [4Fe-4S] cluster. Residue Tyr30 coordinates S-adenosyl-L-methionine. A [4Fe-4S] cluster-binding site is contributed by Cys31. Arg68 contributes to the GTP binding site. Gly72 is a binding site for S-adenosyl-L-methionine. Position 99 (Thr99) interacts with GTP. An S-adenosyl-L-methionine-binding site is contributed by Ser123. Lys160 contacts GTP. Met194 contributes to the S-adenosyl-L-methionine binding site. Residues Cys257 and Cys260 each contribute to the [4Fe-4S] cluster site. 262 to 264 is a binding site for GTP; sequence RLR. Cys274 provides a ligand contact to [4Fe-4S] cluster.

This sequence belongs to the radical SAM superfamily. MoaA family. Monomer and homodimer. It depends on [4Fe-4S] cluster as a cofactor.

The enzyme catalyses GTP + AH2 + S-adenosyl-L-methionine = (8S)-3',8-cyclo-7,8-dihydroguanosine 5'-triphosphate + 5'-deoxyadenosine + L-methionine + A + H(+). It functions in the pathway cofactor biosynthesis; molybdopterin biosynthesis. In terms of biological role, catalyzes the cyclization of GTP to (8S)-3',8-cyclo-7,8-dihydroguanosine 5'-triphosphate. This Klebsiella pneumoniae (strain 342) protein is GTP 3',8-cyclase.